The primary structure comprises 227 residues: Lipoprotein-releasing system ATP-binding protein LolD (227 aa).

An ABC transporter domain is found at 6-227 (LTSQKLYKSY…LHEGSLYARE (222 aa)). Residue 42–49 (GPSGSGKS) participates in ATP binding.

This sequence belongs to the ABC transporter superfamily. Lipoprotein translocase (TC 3.A.1.125) family. The complex is composed of two ATP-binding proteins (LolD) and two transmembrane proteins (LolC and LolE).

The protein localises to the cell inner membrane. Its function is as follows. Part of the ABC transporter complex LolCDE involved in the translocation of mature outer membrane-directed lipoproteins, from the inner membrane to the periplasmic chaperone, LolA. Responsible for the formation of the LolA-lipoprotein complex in an ATP-dependent manner. The polypeptide is Lipoprotein-releasing system ATP-binding protein LolD (Legionella pneumophila (strain Paris)).